We begin with the raw amino-acid sequence, 237 residues long: Flagellar L-ring protein (237 aa).

Positions M1–G16 are cleaved as a signal peptide. C17 carries N-palmitoyl cysteine lipidation. The S-diacylglycerol cysteine moiety is linked to residue C17. A disordered region spans residues P122–V143. Residues D124–K140 show a composition bias toward low complexity.

This sequence belongs to the FlgH family. The basal body constitutes a major portion of the flagellar organelle and consists of four rings (L,P,S, and M) mounted on a central rod.

It localises to the cell outer membrane. The protein localises to the bacterial flagellum basal body. Its function is as follows. Assembles around the rod to form the L-ring and probably protects the motor/basal body from shearing forces during rotation. The protein is Flagellar L-ring protein of Allorhizobium ampelinum (strain ATCC BAA-846 / DSM 112012 / S4) (Agrobacterium vitis (strain S4)).